The primary structure comprises 198 residues: MSNLRLQKRLASAVLKCGKHRVWLDPNEVSEISGANSRQSIRRLVNDGLIIRKPVTVHSRFRAREYEEARRKGRHTGYGKRRGTANARMPEKTLWIRRMRVLRNLLRRYRDAKKLDKHLYHELYLRAKGNNFKNKKNLIEYIFKKKTENKRAKQLADQAQARRDKNKESRKRREERQVVKRAELLRKISQSEKVIAGK.

Disordered stretches follow at residues 66–85 and 150–177; these read YEEARRKGRHTGYGKRRGTA and KRAKQLADQAQARRDKNKESRKRREERQ. Basic residues predominate over residues 71–83; it reads RKGRHTGYGKRRG. A compositionally biased stretch (basic and acidic residues) spans 160–177; the sequence is QARRDKNKESRKRREERQ.

This sequence belongs to the eukaryotic ribosomal protein eL19 family.

The protein is Large ribosomal subunit protein eL19 (rpl-19) of Caenorhabditis elegans.